Here is a 510-residue protein sequence, read N- to C-terminus: uncharacterized protein (510 aa).

Transmembrane regions (helical) follow at residues 17-37 (LKLG…LVVL), 56-76 (LIIH…ASVW), 111-131 (VLYI…ISPL), 148-168 (IVFI…AINI), 180-200 (LVNV…VCFG), 223-243 (LLFW…LIFI), 261-281 (FYLF…FGHI), 300-320 (YLGG…LVLM), 355-375 (IIKT…LIAI), 382-402 (LVIP…CMGY), 434-454 (AIYL…FSGI), and 472-492 (LLMG…LMFV).

The protein to A.aeolicus AQ_155.

It is found in the cell membrane. This is an uncharacterized protein from Rickettsia prowazekii (strain Madrid E).